A 515-amino-acid chain; its full sequence is Fatty acyl-CoA reductase 1 (515 aa).

At 1–465 (MVSIPEYYEG…ARKHLNKLRN (465 aa)) the chain is on the cytoplasmic side. Residues 451-507 (SGLPAARKHLNKLRNIRYGFNTILVILIWRIFIARSQMARNIWYFVVSLCYKFLSYF) form a necessary and sufficient for PEX19-mediated localization into peroxisome membrane region. The chain crosses the membrane as a helical span at residues 466–483 (IRYGFNTILVILIWRIFI). The Peroxisomal portion of the chain corresponds to 484–515 (ARSQMARNIWYFVVSLCYKFLSYFRASSTMRY).

This sequence belongs to the fatty acyl-CoA reductase family. As to quaternary structure, interacts with PEX19; PEX19 mediates the targeting of FAR1 to peroxisomes.

It is found in the peroxisome membrane. It catalyses the reaction a long-chain fatty acyl-CoA + 2 NADPH + 2 H(+) = a long-chain primary fatty alcohol + 2 NADP(+) + CoA. The enzyme catalyses hexadecanoyl-CoA + 2 NADPH + 2 H(+) = hexadecan-1-ol + 2 NADP(+) + CoA. It carries out the reaction octadecanoyl-CoA + 2 NADPH + 2 H(+) = octadecan-1-ol + 2 NADP(+) + CoA. The catalysed reaction is (9Z)-octadecenoyl-CoA + 2 NADPH + 2 H(+) = (9Z)-octadecen-1-ol + 2 NADP(+) + CoA. It catalyses the reaction (9Z,12Z)-octadecadienoyl-CoA + 2 NADPH + 2 H(+) = (9Z,12Z)-octadecadien-1-ol + 2 NADP(+) + CoA. The enzyme catalyses eicosanoyl-CoA + 2 NADPH + 2 H(+) = eicosan-1-ol + 2 NADP(+) + CoA. It carries out the reaction 16-methylheptadecanoyl-CoA + 2 NADPH + 2 H(+) = 16-methylheptadecan-1-ol + 2 NADP(+) + CoA. The catalysed reaction is 18-methylnonadecanoyl-CoA + 2 NADPH + 2 H(+) = 18-methylnonadecan-1-ol + 2 NADP(+) + CoA. In terms of biological role, catalyzes the reduction of saturated and unsaturated C16 or C18 fatty acyl-CoA to fatty alcohols. It plays an essential role in the production of ether lipids/plasmalogens which synthesis requires fatty alcohols. In parallel, it is also required for wax monoesters production since fatty alcohols also constitute a substrate for their synthesis. The sequence is that of Fatty acyl-CoA reductase 1 from Pongo abelii (Sumatran orangutan).